The chain runs to 682 residues: tRNA(Met) cytidine acetyltransferase TmcA (682 aa).

ATP-binding positions include Q176, G198 to M207, and R320. The 178-residue stretch at Q357–F534 folds into the N-acetyltransferase domain. Residues V462–V464 and E502 contribute to the acetyl-CoA site.

This sequence belongs to the RNA cytidine acetyltransferase family. TmcA subfamily.

It localises to the cytoplasm. The enzyme catalyses cytidine(34) in elongator tRNA(Met) + acetyl-CoA + ATP + H2O = N(4)-acetylcytidine(34) in elongator tRNA(Met) + ADP + phosphate + CoA + H(+). Catalyzes the formation of N(4)-acetylcytidine (ac(4)C) at the wobble position of tRNA(Met), by using acetyl-CoA as an acetyl donor and ATP (or GTP). The protein is tRNA(Met) cytidine acetyltransferase TmcA of Photorhabdus asymbiotica subsp. asymbiotica (strain ATCC 43949 / 3105-77) (Xenorhabdus luminescens (strain 2)).